A 425-amino-acid chain; its full sequence is Inositol hexakisphosphate kinase 2 (425 aa).

ATP contacts are provided by residues 206–208 and Asp219; that span reads ENL. Substrate-binding positions include 215 to 223, Lys221, and 235 to 242; these read PCVLDLKMG and KAANQIRK. Asp382 contacts ATP. His385 contacts substrate.

The protein belongs to the inositol phosphokinase (IPK) family. As to expression, detected in kidney, intestine, liver and heart.

Its subcellular location is the nucleus. The enzyme catalyses 1D-myo-inositol hexakisphosphate + ATP = 5-diphospho-1D-myo-inositol 1,2,3,4,6-pentakisphosphate + ADP. Its pathway is phospholipid metabolism; phosphatidylinositol metabolism. In terms of biological role, converts inositol hexakisphosphate (InsP6) to diphosphoinositol pentakisphosphate (InsP7/PP-InsP5). In Oryctolagus cuniculus (Rabbit), this protein is Inositol hexakisphosphate kinase 2 (IP6K2).